The chain runs to 590 residues: Threonine dehydratase biosynthetic, chloroplastic (590 aa).

Residues 1–44 constitute a chloroplast transit peptide; sequence MLSTSTTNSSILPFRSRASSSTFIARPPANFNSIFTTSVRVFPI. An N6-(pyridoxal phosphate)lysine modification is found at Lys-139. ACT-like domains lie at 416 to 488 and 509 to 580; these read ALLG…NISH and EVFV…IDQY.

Belongs to the serine/threonine dehydratase family. The cofactor is pyridoxal 5'-phosphate. Found at higher levels in flowers than in other organs.

It localises to the plastid. The protein resides in the chloroplast. It carries out the reaction L-threonine = 2-oxobutanoate + NH4(+). The protein operates within amino-acid biosynthesis; L-isoleucine biosynthesis; 2-oxobutanoate from L-threonine: step 1/1. Its activity is regulated as follows. Allosterically inhibited by isoleucine. This chain is Threonine dehydratase biosynthetic, chloroplastic, found in Cicer arietinum (Chickpea).